The primary structure comprises 248 residues: Putative homeobox-leucine zipper protein HOX26 (248 aa).

The segment at 50–118 (KKVAAAAVVA…GDEEGASRKK (69 aa)) is disordered. A compositionally biased stretch (basic residues) spans 79–89 (RQRRSCKKGRR). Residues 114 to 173 (ASRKKLRLTGEQATLLEDSFRAHNILSHAEKQELAGKLGLSARQVEVWFQNRRARTKLKQ) constitute a DNA-binding region (homeobox). The leucine-zipper stretch occupies residues 172-216 (KQTEADCDLLRRWCDHLAADNARLRRDLAELRRSSSSPPVSGLAV).

It belongs to the HD-ZIP homeobox family. Class II subfamily.

The protein localises to the nucleus. Its function is as follows. Probable transcription factor. The polypeptide is Putative homeobox-leucine zipper protein HOX26 (HOX26) (Oryza sativa subsp. japonica (Rice)).